Here is a 123-residue protein sequence, read N- to C-terminus: Phosphoribosyl-AMP cyclohydrolase (123 aa).

D76 lines the Mg(2+) pocket. C77 contacts Zn(2+). Mg(2+) is bound by residues D78 and D80. Zn(2+)-binding residues include C93 and C100.

The protein belongs to the PRA-CH family. In terms of assembly, homodimer. Mg(2+) serves as cofactor. Requires Zn(2+) as cofactor.

It localises to the cytoplasm. The catalysed reaction is 1-(5-phospho-beta-D-ribosyl)-5'-AMP + H2O = 1-(5-phospho-beta-D-ribosyl)-5-[(5-phospho-beta-D-ribosylamino)methylideneamino]imidazole-4-carboxamide. Its pathway is amino-acid biosynthesis; L-histidine biosynthesis; L-histidine from 5-phospho-alpha-D-ribose 1-diphosphate: step 3/9. Catalyzes the hydrolysis of the adenine ring of phosphoribosyl-AMP. This Methanocorpusculum labreanum (strain ATCC 43576 / DSM 4855 / Z) protein is Phosphoribosyl-AMP cyclohydrolase.